The sequence spans 486 residues: ATP synthase subunit beta (486 aa).

170–177 (GGAGVGKT) is a binding site for ATP.

The protein belongs to the ATPase alpha/beta chains family. F-type ATPases have 2 components, CF(1) - the catalytic core - and CF(0) - the membrane proton channel. CF(1) has five subunits: alpha(3), beta(3), gamma(1), delta(1), epsilon(1). CF(0) has three main subunits: a(1), b(2) and c(9-12). The alpha and beta chains form an alternating ring which encloses part of the gamma chain. CF(1) is attached to CF(0) by a central stalk formed by the gamma and epsilon chains, while a peripheral stalk is formed by the delta and b chains.

The protein localises to the cell membrane. It catalyses the reaction ATP + H2O + 4 H(+)(in) = ADP + phosphate + 5 H(+)(out). In terms of biological role, produces ATP from ADP in the presence of a proton gradient across the membrane. The catalytic sites are hosted primarily by the beta subunits. This chain is ATP synthase subunit beta, found in Kineococcus radiotolerans (strain ATCC BAA-149 / DSM 14245 / SRS30216).